The sequence spans 2475 residues: Gellan lyase (2475 aa).

The N-terminal stretch at 1 to 35 (MRFSWKKLVSAALVMALLVGIVYPAASGRGAVASA) is a signal peptide. The 86-residue stretch at 623–708 (APANVQVAIS…QPATATSPGE (86 aa)) folds into the Fibronectin type-III domain. Residues 1295–1518 (GAFSLTIDDN…RDQIWVGRYG (224 aa)) form the NodB homology domain. Residues 2111–2223 (QPGQQLELTV…VSTAVSLSDF (113 aa)) enclose the Cohesin domain.

Subject to proteolytic processing after secretion. Cleavage occurs between Gly-1205 and Leu-1206. This gives rise to a N-terminal gellan lyase of 130 kDa being the mature form of the gellan lyase. The function of C-terminal gellan lyase is not known.

The protein resides in the secreted. The catalysed reaction is Eliminative cleavage of beta-D-glucopyranosyl-(1-&gt;4)-beta-D-glucopyranosyluronate bonds of gellan backbone releasing tetrasaccharides containing a 4-deoxy-4,5-unsaturated D-glucopyranosyluronic acid at the non-reducing end. The tetrasaccharide produced from deacetylated gellan is beta-D-4-deoxy-Delta(4)-GlcAp-(1-&gt;4)-beta-D-Glcp-(1-&gt;4)-alpha-L-Rhap-(1-&gt;3)-beta-D-Glcp.. Cleaves the glycosidic bonds of gellan backbone and releases tetrasaccharide units of glucuronyl-glucosyl-rhamnosyl-glucose with unsaturated glucuronic acid at the non-reducing terminal. The enzyme is highly specific to the heteropolysaccharide gellan, especially deacetylated gellan. This is Gellan lyase from Bacillus sp.